The following is a 143-amino-acid chain: Protein STIG1 (143 aa).

Residues 1–23 form the signal peptide; the sequence is MDFIILLIAILALSSTPITIISG. A sufficient for PI(4)P binding region spans residues 76–87; it reads RTCCFNYFCVDL. The segment at 80–83 is sufficient for binding to the extracellular domain of PRK2; it reads FNYF. Residues 88 to 115 are sufficient for PI(3)P binding; it reads FTNRFNCGSCGLVCIVGTRCCGGICVDI.

This sequence belongs to the STIG1 family. Interacts with PRK1 and PRK2 (via extracellular domain). Expressed in the stigma and the upper section of the style.

The protein localises to the secreted. Its subcellular location is the extracellular space. It is found in the apoplast. Its function is as follows. Promotes pollen tube growth. A C-terminal peptide is cleaved from the propeptide in the stigmatic exudate and represent the major form of STIG1. Binds phosphoinositol lipids. The binding of external phosphatidylinositol 3-phosphate (PI(3)P) and PRK2 by STIG1 induces a rapid intracellular reactive oxygen species elevation. The polypeptide is Protein STIG1 (Solanum lycopersicum (Tomato)).